A 101-amino-acid polypeptide reads, in one-letter code: U1-sicaritoxin-Li1a (101 aa).

Residues 1–19 form the signal peptide; it reads MRFLVGAVLVVVLVACATA. The propeptide occupies 20–35; that stretch reads FESDAETFKSLVVEER. 4 disulfides stabilise this stretch: C37/C54, C45/C59, C53/C72, and C61/C70. K81 bears the Lysine amide mark. Positions 85-101 are excised as a propeptide; it reads ALLLPVETHRLLFPEQW.

This sequence belongs to the neurotoxin 28 (Litx) family. As to expression, expressed by the venom gland.

The protein resides in the secreted. In terms of biological role, toxin active against insects (S.frugiperda larvae). May act on sodium (Nav) or calcium channels (Cav). The chain is U1-sicaritoxin-Li1a from Loxosceles intermedia (Brown spider).